A 570-amino-acid chain; its full sequence is MRLSQLLVPTLREIPAEAEIPSHILMLKAALMRKLASGVYIYLPLGQRVLRKVEQIVREEMDRAGSQEVLMSALIPAELLKESGRWDVFGPEMFKLKDRNERDFCLGPTHEEVFTDLIRNEVKSYRQLPLILYQIQTKFRDERRPRFGVMRSREFIMKDAYSFDMDWEGLDKSFNKMYEAYCRIFDRCGLKYLVVEADSGAMGGKDSKEFMVISGVGEAVIAYCDNCGYAANEEKAECLINQEIVEEMLPKEEVYTPNVRTIEELVNFLGITPNKFVKTLIYKAKDNVVAALVRGDRDLNETKLLNILGIREEELELADASIVEKVTGAKVGFAGPIGLKGEVMIIVDNEIPQMRNFIVGANETDYHIKNVNYGRDFKADVVADIKNVIEGDKCPRCGSPLKIDRGIEVGHIFKLGTKYSDALGAKYVDEEGNEKPIIMGCYGIGINRTVAAIIEQHHDEKGIIWPMSVAPYHVIIVPVNVSNEAQNRVAEDIYAALQKEGIEVLIDDRDLRAGVKFNDADLLGIPIRITVGKKVDDGIVEIKLRENEEAEEVKISDVVEKVKNIIKEKM.

Belongs to the class-II aminoacyl-tRNA synthetase family. ProS type 1 subfamily. As to quaternary structure, homodimer.

Its subcellular location is the cytoplasm. It catalyses the reaction tRNA(Pro) + L-proline + ATP = L-prolyl-tRNA(Pro) + AMP + diphosphate. In terms of biological role, catalyzes the attachment of proline to tRNA(Pro) in a two-step reaction: proline is first activated by ATP to form Pro-AMP and then transferred to the acceptor end of tRNA(Pro). As ProRS can inadvertently accommodate and process non-cognate amino acids such as alanine and cysteine, to avoid such errors it has two additional distinct editing activities against alanine. One activity is designated as 'pretransfer' editing and involves the tRNA(Pro)-independent hydrolysis of activated Ala-AMP. The other activity is designated 'posttransfer' editing and involves deacylation of mischarged Ala-tRNA(Pro). The misacylated Cys-tRNA(Pro) is not edited by ProRS. The sequence is that of Proline--tRNA ligase from Thermoanaerobacter pseudethanolicus (strain ATCC 33223 / 39E) (Clostridium thermohydrosulfuricum).